Consider the following 508-residue polypeptide: Maturase K (508 aa).

It belongs to the intron maturase 2 family. MatK subfamily.

The protein localises to the plastid. Its subcellular location is the chloroplast. Functionally, usually encoded in the trnK tRNA gene intron. Probably assists in splicing its own and other chloroplast group II introns. This chain is Maturase K, found in Wolffia arrhiza (Rootless water-meal).